The sequence spans 235 residues: Non-structural maintenance of chromosomes element 1 homolog (235 aa).

An RING-type; atypical zinc finger spans residues 181-225 (IKNCTLCKCLVLWDIRCGSCNIQYHRGCIQTYLQRRDICPSCGNL). Thr-185 bears the Phosphothreonine mark.

This sequence belongs to the NSE1 family. In terms of assembly, component of the Smc5-Smc6 complex which consists at least of Smc5, Smc6, Nse1, Nse2, Nse4 and MAGE. Nse1, Nse4 and MAGE probably form a subcomplex that bridges the head domains of the Smc5-Smc6 heterodimer. Interacts with MAGE and Nse4.

It is found in the nucleus. The catalysed reaction is S-ubiquitinyl-[E2 ubiquitin-conjugating enzyme]-L-cysteine + [acceptor protein]-L-lysine = [E2 ubiquitin-conjugating enzyme]-L-cysteine + N(6)-ubiquitinyl-[acceptor protein]-L-lysine.. Functionally, component of the SMC5-SMC6 complex, a complex involved in repair of DNA double-strand breaks by homologous recombination. The complex may promote sister chromatid homologous recombination by recruiting the SMC1-SMC3 cohesin complex to double-strand breaks. This Drosophila melanogaster (Fruit fly) protein is Non-structural maintenance of chromosomes element 1 homolog.